The following is a 424-amino-acid chain: Serine--tRNA ligase (424 aa).

230-232 serves as a coordination point for L-serine; sequence TAE. 261 to 263 is an ATP binding site; sequence RSE. Residue Glu-284 coordinates L-serine. 348–351 contacts ATP; it reads EISS. Position 384 (Ser-384) interacts with L-serine.

The protein belongs to the class-II aminoacyl-tRNA synthetase family. Type-1 seryl-tRNA synthetase subfamily. As to quaternary structure, homodimer. The tRNA molecule binds across the dimer.

Its subcellular location is the cytoplasm. It carries out the reaction tRNA(Ser) + L-serine + ATP = L-seryl-tRNA(Ser) + AMP + diphosphate + H(+). The catalysed reaction is tRNA(Sec) + L-serine + ATP = L-seryl-tRNA(Sec) + AMP + diphosphate + H(+). It participates in aminoacyl-tRNA biosynthesis; selenocysteinyl-tRNA(Sec) biosynthesis; L-seryl-tRNA(Sec) from L-serine and tRNA(Sec): step 1/1. Catalyzes the attachment of serine to tRNA(Ser). Is also able to aminoacylate tRNA(Sec) with serine, to form the misacylated tRNA L-seryl-tRNA(Sec), which will be further converted into selenocysteinyl-tRNA(Sec). The chain is Serine--tRNA ligase from Streptococcus pneumoniae (strain JJA).